A 761-amino-acid chain; its full sequence is Probable ubiquitin carboxyl-terminal hydrolase creB (761 aa).

Residues 1–45 (MGSFLRSFRHNGGSTAPSVGAVPAKKEPQPPPMTPLEKRLLDMGP) form a disordered region. Over residues 36 to 45 (LEKRLLDMGP) the composition is skewed to basic and acidic residues. The USP domain occupies 55-468 (YGMENYGNTC…CAYVLFYQET (414 aa)). The active-site Nucleophile is Cys-64. Disordered stretches follow at residues 113–146 (EAEAQAEKQKAANAQRPGMPPNPQQKPEDKDSPE) and 242–269 (PLMEKSLPAPETADSVDQSSSTGSKTPN). The segment covering 256–269 (SVDQSSSTGSKTPN) has biased composition (polar residues). The active-site Proton acceptor is His-419. Residues 496 to 761 (LKQNGFPQSP…LRKKSFSILS (266 aa)) are disordered. Residues 555-566 (PLSPVPPVPPIP) show a composition bias toward pro residues. Residues 577 to 640 (KNDALAKREE…ASKAEEDRRL (64 aa)) are a coiled coil. A compositionally biased stretch (basic and acidic residues) spans 580–649 (ALAKREEKER…LSTENGKEKQ (70 aa)). Residues 655 to 666 (RLKRGSKSLSHR) are compositionally biased toward basic residues. Residues 692–710 (SQSGPTSEQQQQQRQQSPP) show a composition bias toward low complexity. Residues 712–722 (HDQPPNSPQPG) are compositionally biased toward pro residues. Positions 725-743 (TIREDEQVNHKDSKHERTG) are enriched in basic and acidic residues. Residues 744–761 (HGKWRSFSLRKKSFSILS) are compositionally biased toward basic residues.

It belongs to the peptidase C19 family. Interacts with creA, creC and qutD.

It carries out the reaction Thiol-dependent hydrolysis of ester, thioester, amide, peptide and isopeptide bonds formed by the C-terminal Gly of ubiquitin (a 76-residue protein attached to proteins as an intracellular targeting signal).. In terms of biological role, ubiquitin thioesterase component of the regulatory network controlling carbon source utilization through ubiquitination and deubiquitination involving creA, creB, creC, creD and acrB. Deubiquitinates the creA catabolic repressor and the quinate permease qutD. Also plays a role in response to carbon starvation and the control of extracellular proteases activity. In Neosartorya fischeri (strain ATCC 1020 / DSM 3700 / CBS 544.65 / FGSC A1164 / JCM 1740 / NRRL 181 / WB 181) (Aspergillus fischerianus), this protein is Probable ubiquitin carboxyl-terminal hydrolase creB (creB).